Consider the following 316-residue polypeptide: Beta-ketoacyl-[acyl-carrier-protein] synthase III 4 (316 aa).

Residues C114 and H242 contribute to the active site. Residues 243–247 (QANLR) form an ACP-binding region. N272 is an active-site residue.

The protein belongs to the thiolase-like superfamily. FabH family. In terms of assembly, homodimer.

It is found in the cytoplasm. It catalyses the reaction malonyl-[ACP] + acetyl-CoA + H(+) = 3-oxobutanoyl-[ACP] + CO2 + CoA. It functions in the pathway lipid metabolism; fatty acid biosynthesis. Functionally, catalyzes the condensation reaction of fatty acid synthesis by the addition to an acyl acceptor of two carbons from malonyl-ACP. Catalyzes the first condensation reaction which initiates fatty acid synthesis and may therefore play a role in governing the total rate of fatty acid production. Possesses both acetoacetyl-ACP synthase and acetyl transacylase activities. Its substrate specificity determines the biosynthesis of branched-chain and/or straight-chain of fatty acids. This chain is Beta-ketoacyl-[acyl-carrier-protein] synthase III 4, found in Streptomyces coelicolor (strain ATCC BAA-471 / A3(2) / M145).